A 101-amino-acid polypeptide reads, in one-letter code: uncharacterized protein (101 aa).

The helical transmembrane segment at 68-90 (LAFAFCGRANTFISCFISFASLI) threads the bilayer.

It localises to the membrane. This is an uncharacterized protein from Saccharomyces cerevisiae (strain ATCC 204508 / S288c) (Baker's yeast).